Here is a 159-residue protein sequence, read N- to C-terminus: Ribosomal RNA large subunit methyltransferase H (159 aa).

S-adenosyl-L-methionine contacts are provided by residues Leu-76, Gly-108, and Phe-127–Tyr-132.

It belongs to the RNA methyltransferase RlmH family. Homodimer.

Its subcellular location is the cytoplasm. It catalyses the reaction pseudouridine(1915) in 23S rRNA + S-adenosyl-L-methionine = N(3)-methylpseudouridine(1915) in 23S rRNA + S-adenosyl-L-homocysteine + H(+). Functionally, specifically methylates the pseudouridine at position 1915 (m3Psi1915) in 23S rRNA. This is Ribosomal RNA large subunit methyltransferase H from Carboxydothermus hydrogenoformans (strain ATCC BAA-161 / DSM 6008 / Z-2901).